The chain runs to 208 residues: Large ribosomal subunit protein uL3 (208 aa).

A disordered region spans residues 123-146; that stretch reads RHGQSRGPMAHGSRYHRRPGSMGP.

It belongs to the universal ribosomal protein uL3 family. Part of the 50S ribosomal subunit. Forms a cluster with proteins L14 and L19.

Functionally, one of the primary rRNA binding proteins, it binds directly near the 3'-end of the 23S rRNA, where it nucleates assembly of the 50S subunit. The sequence is that of Large ribosomal subunit protein uL3 from Streptococcus thermophilus (strain CNRZ 1066).